The sequence spans 204 residues: Potassium-transporting ATPase KdpC subunit (204 aa).

Residues 21 to 41 (AALVIFVGLSLVTGVLYPVVV) traverse the membrane as a helical segment.

Belongs to the KdpC family. As to quaternary structure, the system is composed of three essential subunits: KdpA, KdpB and KdpC.

Its subcellular location is the cell inner membrane. Functionally, part of the high-affinity ATP-driven potassium transport (or Kdp) system, which catalyzes the hydrolysis of ATP coupled with the electrogenic transport of potassium into the cytoplasm. This subunit acts as a catalytic chaperone that increases the ATP-binding affinity of the ATP-hydrolyzing subunit KdpB by the formation of a transient KdpB/KdpC/ATP ternary complex. This is Potassium-transporting ATPase KdpC subunit from Ralstonia nicotianae (strain ATCC BAA-1114 / GMI1000) (Ralstonia solanacearum).